We begin with the raw amino-acid sequence, 750 residues long: Photosystem I P700 chlorophyll a apoprotein A1 (750 aa).

The next 8 helical transmembrane spans lie at 70–93, 156–179, 195–219, 291–309, 346–369, 385–411, 433–455, and 531–549; these read VFSAHFGQLSIIFLWLSGMYFHGA, LYCTAIGALVFAALMLFAGWFHYH, LNHHLAGLLGLGSLSWAGHQVHVSL, IAHHHLAIAILFLIAGHMY, WHAQLSLNLAMLGSLTIVVAHHMY, LSLFTHHMWIGGFLIVGAAAHAAIFMV, AIISHLNWACIFLGFHSFGLYIH, and FLVHHIHAFTIHVTVLILL. 2 residues coordinate [4Fe-4S] cluster: cysteine 573 and cysteine 582. The next 2 helical transmembrane spans lie at 589–610 and 664–686; these read HVFLGLFWMYNSISVVIFHFSW and LSAYGLFFLGAHFVWAFSLMFLF. Histidine 675 serves as a coordination point for chlorophyll a'. Residues methionine 683 and tyrosine 691 each contribute to the chlorophyll a site. Tryptophan 692 provides a ligand contact to phylloquinone. The chain crosses the membrane as a helical span at residues 724–744; it reads AVGVTHYLLGGIATTWAFFLA.

This sequence belongs to the PsaA/PsaB family. The PsaA/B heterodimer binds the P700 chlorophyll special pair and subsequent electron acceptors. PSI consists of a core antenna complex that captures photons, and an electron transfer chain that converts photonic excitation into a charge separation. The eukaryotic PSI reaction center is composed of at least 11 subunits. The cofactor is P700 is a chlorophyll a/chlorophyll a' dimer, A0 is one or more chlorophyll a, A1 is one or both phylloquinones and FX is a shared 4Fe-4S iron-sulfur center..

Its subcellular location is the plastid. It is found in the chloroplast thylakoid membrane. The enzyme catalyses reduced [plastocyanin] + hnu + oxidized [2Fe-2S]-[ferredoxin] = oxidized [plastocyanin] + reduced [2Fe-2S]-[ferredoxin]. Functionally, psaA and PsaB bind P700, the primary electron donor of photosystem I (PSI), as well as the electron acceptors A0, A1 and FX. PSI is a plastocyanin-ferredoxin oxidoreductase, converting photonic excitation into a charge separation, which transfers an electron from the donor P700 chlorophyll pair to the spectroscopically characterized acceptors A0, A1, FX, FA and FB in turn. Oxidized P700 is reduced on the lumenal side of the thylakoid membrane by plastocyanin. The chain is Photosystem I P700 chlorophyll a apoprotein A1 from Solanum bulbocastanum (Wild potato).